The chain runs to 61 residues: Weak toxin CM-1c (61 aa).

Cystine bridges form between Cys-3/Cys-21, Cys-14/Cys-37, Cys-41/Cys-53, and Cys-54/Cys-59.

This sequence belongs to the three-finger toxin family. Short-chain subfamily. Orphan group VI sub-subfamily. As to expression, expressed by the venom gland.

The protein localises to the secreted. The polypeptide is Weak toxin CM-1c (Hemachatus haemachatus (Rinkhals)).